The following is an 807-amino-acid chain: Glycerol-3-phosphate acyltransferase (807 aa).

Positions 308 to 313 (CHRSHM) match the HXXXXD motif motif.

Belongs to the GPAT/DAPAT family.

Its subcellular location is the cell inner membrane. It catalyses the reaction sn-glycerol 3-phosphate + an acyl-CoA = a 1-acyl-sn-glycero-3-phosphate + CoA. The protein operates within phospholipid metabolism; CDP-diacylglycerol biosynthesis; CDP-diacylglycerol from sn-glycerol 3-phosphate: step 1/3. The chain is Glycerol-3-phosphate acyltransferase from Shewanella amazonensis (strain ATCC BAA-1098 / SB2B).